Reading from the N-terminus, the 556-residue chain is Sensory neuron membrane protein 2 (556 aa).

Residues 1–6 (MIHWSL) are Cytoplasmic-facing. Residues 7-27 (IVSALGVCVAVLGGYCGWILF) traverse the membrane as a helical segment. Topologically, residues 28–522 (PNMVHKKVEQ…KLINTLKTLN (495 aa)) are extracellular. Residues Asn-66, Asn-274, Asn-310, and Asn-324 are each glycosylated (N-linked (GlcNAc...) asparagine). Disulfide bonds link Cys-320–Cys-388 and Cys-349–Cys-415. Residues 523 to 543 (IVHWATLCGGIGVAVACLIYY) form a helical membrane-spanning segment. Over 544–556 (IYQRGRVVEPPVK) the chain is Cytoplasmic.

The protein belongs to the CD36 family. As to expression, detected in the head and to a lesser extent in legs and wings.

It is found in the cell membrane. In terms of biological role, plays an olfactory role that is not restricted to pheromone sensitivity. This chain is Sensory neuron membrane protein 2, found in Drosophila melanogaster (Fruit fly).